The following is a 141-amino-acid chain: Ribonuclease P protein component (141 aa).

2 disordered regions span residues 37 to 56 and 114 to 141; these read RTEEESNAAKTGDNPRVGFT and RRITAKGERRSGGKRRTERPEPGPVNGK. Positions 114-124 are enriched in basic and acidic residues; the sequence is RRITAKGERRS.

Belongs to the RnpA family. As to quaternary structure, consists of a catalytic RNA component (M1 or rnpB) and a protein subunit.

The enzyme catalyses Endonucleolytic cleavage of RNA, removing 5'-extranucleotides from tRNA precursor.. RNaseP catalyzes the removal of the 5'-leader sequence from pre-tRNA to produce the mature 5'-terminus. It can also cleave other RNA substrates such as 4.5S RNA. The protein component plays an auxiliary but essential role in vivo by binding to the 5'-leader sequence and broadening the substrate specificity of the ribozyme. In Brucella melitensis biotype 1 (strain ATCC 23456 / CCUG 17765 / NCTC 10094 / 16M), this protein is Ribonuclease P protein component.